The primary structure comprises 652 residues: Complement component C1q receptor (652 aa).

Residues 1–21 form the signal peptide; the sequence is MATSMGLLLLLLLLLTQPGAG. At 24-580 the chain is on the extracellular side; that stretch reads ADTEAVVCVG…QNNDGTDGQK (557 aa). The C-type lectin domain maps to 32–174; the sequence is VGTACYTAHS…CGSPGSPGSN (143 aa). 16 cysteine pairs are disulfide-bonded: C141–C165, C264–C275, C271–C285, C287–C300, C306–C317, C311–C328, C330–C343, C349–C358, C354–C367, C369–C383, C389–C400, C396–C409, C411–C425, C431–C443, C439–C452, and C454–C467. EGF-like domains follow at residues 260–301 and 302–344; these read PKYG…VTCA and SRNP…LDCV. N325 carries N-linked (GlcNAc...) asparagine glycosylation. Residues 345–384 enclose the EGF-like 3; calcium-binding domain; the sequence is DVDECQDSPCAQECVNTPGGFRCECWVGYEPGGPGEGACQ. An EGF-like 4; calcium-binding domain is found at 385–426; the sequence is DVDECALGRSPCAQGCTNTDGSFHCSCEEGYVLAGEDGTQCQ. Residues 427-468 enclose the EGF-like 5; calcium-binding domain; that stretch reads DVDECVGPGGPLCDSLCFNTQGSFHCGCLPGWVLAPNGVSCT. 2 disordered regions span residues 472-546 and 553-572; these read VSLG…VWRE and TAAS…ATQN. Polar residues predominate over residues 512 to 526; sequence ATPTTSRPSLSSDAP. A helical membrane pass occupies residues 581-601; the sequence is LLLFYILGTVVAILLLLALAL. At 602–652 the chain is on the cytoplasmic side; sequence GLLVYRKRRAKREEKKEKKPQNAADSYSWVPERAESRAMENQYSPTPGTDC. Positions 611–652 are disordered; it reads AKREEKKEKKPQNAADSYSWVPERAESRAMENQYSPTPGTDC. The segment covering 612–621 has biased composition (basic and acidic residues); it reads KREEKKEKKP. At S627 the chain carries Phosphoserine. Phosphotyrosine is present on residues Y628 and Y644. The segment covering 640–652 has biased composition (polar residues); the sequence is MENQYSPTPGTDC.

In terms of assembly, homodimer. Interacts with C1QBP; the association may represent a cell surface C1q receptor. Interacts with surfactant protein A/SFTPA1. Interacts with multimerin-2/MMRN2. Interacts with DAG1; this interaction plays an important role in endothelial cell migration. Interacts with CBL. Interacts with IGFBP7. Interacts with VEGFR2. As to quaternary structure, (Microbial infection) Interacts with hepatitis virus C/HCV core protein. N- and O-glycosylated. In terms of processing, phosphorylated on Tyr-628 and Tyr-644 by SRC; these phosphorylations promote endothelial cell adhesion and migration. As to expression, highly expressed in endothelial cells, platelets, cells of myeloid origin, such as monocytes and neutrophils. Not expressed in cells of lymphoid origin.

It is found in the cell membrane. In terms of biological role, cell surface receptor that plays a role in various physiological processes including inflammation, phagocytosis, and cell adhesion. Plays a role in phagocytosis and enhances the uptake of apoptotic cells and immune complexes by acting as a receptor for defense collagens including surfactant protein A/SFTPA1, C1q, and mannose-binding lectin (MBL2). Plays a role in the regulation of endothelial cell function and adhesion by activating angiogenesis. Mechanistically, exerts its angiogenic function by associating with beta-dystroglycan, leading to SRC-dependent phosphorylation and subsequent recruitment of CBL. In turn, CBL provides a docking site for downstream signaling components, such as CRKL to enhance cell migration. Participates in angiogenesis also by acting as a receptor for the ECM pan-endothelial glycoprotein multimerin-2/MMRN2 and IGFBP7 ligands. Both ligands play a non-redundant role in CD93-mediated endothelial cell function. Acts as a key regulator of endothelial barrier function through modulating VEGFR2 function. The sequence is that of Complement component C1q receptor (CD93) from Homo sapiens (Human).